A 314-amino-acid chain; its full sequence is Thymidylate synthase (314 aa).

DUMP contacts are provided by residues arginine 21 and arginine 176–arginine 177. Residue cysteine 196 is the Nucleophile of the active site. DUMP is bound by residues arginine 216–aspartate 219, asparagine 227, and histidine 257–tyrosine 259. Position 219 (aspartate 219) interacts with (6R)-5,10-methylene-5,6,7,8-tetrahydrofolate. Position 313 (serine 313) interacts with (6R)-5,10-methylene-5,6,7,8-tetrahydrofolate.

This sequence belongs to the thymidylate synthase family. Bacterial-type ThyA subfamily. Homodimer.

It is found in the cytoplasm. The catalysed reaction is dUMP + (6R)-5,10-methylene-5,6,7,8-tetrahydrofolate = 7,8-dihydrofolate + dTMP. Its pathway is pyrimidine metabolism; dTTP biosynthesis. Catalyzes the reductive methylation of 2'-deoxyuridine-5'-monophosphate (dUMP) to 2'-deoxythymidine-5'-monophosphate (dTMP) while utilizing 5,10-methylenetetrahydrofolate (mTHF) as the methyl donor and reductant in the reaction, yielding dihydrofolate (DHF) as a by-product. This enzymatic reaction provides an intracellular de novo source of dTMP, an essential precursor for DNA biosynthesis. This chain is Thymidylate synthase, found in Listeria innocua serovar 6a (strain ATCC BAA-680 / CLIP 11262).